The following is a 266-amino-acid chain: Mitochondrial import inner membrane translocase subunit Tim29 (266 aa).

The transit peptide at 1–37 (MVTAALKRFWSGGHGEAGGEAGGATTVAVKPGLWTRL) directs the protein to the mitochondrion. The Mitochondrial matrix portion of the chain corresponds to 38-65 (STWAGALLRDYAEACGDAAAAARARPGR). The helical transmembrane segment at 66–83 (AALYVGLLGGAAACCALA) threads the bilayer. The Mitochondrial intermembrane segment spans residues 84–266 (PSEAAFEEAL…DSLVQSDVSR (183 aa)).

Component of the TIM22 complex, which core is composed of TIMM22, associated with TIMM10 (TIMM10A and/or TIMM10B), TIMM9, AGK and TIMM29. Interacts with TIMM10B; the interaction is direct. Interacts with TOMM40; linking the TIM22 complex to the TOM complex. Interacts with TIMM22 (when oxidized); the interaction is direct.

The protein resides in the mitochondrion inner membrane. In terms of biological role, component of the TIM22 complex, a complex that mediates the import and insertion of multi-pass transmembrane proteins into the mitochondrial inner membrane. The TIM22 complex forms a twin-pore translocase that uses the membrane potential as the external driving force. Required for the stability of the TIM22 complex and functions in the assembly of the TIMM22 protein into the TIM22 complex. May facilitate cooperation between TIM22 and TOM complexes by interacting with TOMM40. This Mus musculus (Mouse) protein is Mitochondrial import inner membrane translocase subunit Tim29 (Timm29).